Consider the following 538-residue polypeptide: uncharacterized protein (538 aa).

Over residues 1–13 (MYNNNSSTSSDSS) the composition is skewed to low complexity. The tract at residues 1-43 (MYNNNSSTSSDSSNSEEKANAQHASSTDSTSEHTDPAVADEGF) is disordered. 12 helical membrane-spanning segments follow: residues 97-117 (ILHV…SSVF), 134-154 (VALL…ILWA), 163-183 (KIPL…VAVA), 194-214 (FFSG…FADM), 226-246 (IFAC…GFLA), 254-274 (WTEY…LFMK), 328-348 (PIVF…YLLL), 367-387 (ALPY…IAYF), 408-428 (LPPM…LAWS), 434-454 (VHWI…LTIF), 458-478 (LIYL…ANTI), and 504-524 (GSLL…FFIF).

This sequence belongs to the major facilitator superfamily. CAR1 family.

It localises to the endoplasmic reticulum. Its subcellular location is the membrane. This is an uncharacterized protein from Schizosaccharomyces pombe (strain 972 / ATCC 24843) (Fission yeast).